Reading from the N-terminus, the 491-residue chain is Sucrose transport protein SUC9 (491 aa).

Over residues 1-12 (MSDIQAKEDAAP) the composition is skewed to basic and acidic residues. The segment at 1 to 26 (MSDIQAKEDAAPVDRQSSSSVVVPDE) is disordered. Topologically, residues 1–33 (MSDIQAKEDAAPVDRQSSSSVVVPDEPSPLRKM) are cytoplasmic. At S17 the chain carries Phosphoserine. The chain crosses the membrane as a helical span at residues 34–54 (ISVASIAAGIQFGWALQLSLL). The Extracellular segment spans residues 55 to 68 (TPYVQLLGVPHKWS). Residues 69–89 (SFIWLCGPISGLLVQPTVGYF) form a helical membrane-spanning segment. Residues 90–101 (SDRCKSRFGRRR) are Cytoplasmic-facing. A helical transmembrane segment spans residues 102–122 (PFIATGALLVALAVILIGFAA). Residues 123 to 139 (DFGHTMGDKLDEAVKIR) are Extracellular-facing. The chain crosses the membrane as a helical span at residues 140 to 160 (AVGFFVVGFWILDVANNTLQG). The Cytoplasmic segment spans residues 161-181 (PCRAFLGDLAAGDAKKTRTAN). The helical transmembrane segment at 182 to 202 (AIFSFFMAVGNVLGYAAGSYT) threads the bilayer. Over 203-224 (NLHKIFPFTVTKACDIYCANLK) the chain is Extracellular. The helical transmembrane segment at 225-245 (SCFIISITLLIVLTIIALWYV) threads the bilayer. The Cytoplasmic portion of the chain corresponds to 246–277 (EDKQWSPNADSDNEKTPFFGEIFGAFKVMKRP). A helical transmembrane segment spans residues 278-298 (MWMLLAVTALNWIAWFPFLLY). Topologically, residues 299-329 (DTDWMGREVYGGDSAGDDKMKKLYNHGIQVG) are extracellular. Residues 330–350 (SLGLMLNSIVLGVMSLVIGVI) form a helical membrane-spanning segment. Topologically, residues 351–358 (SKKIGAKR) are cytoplasmic. The chain crosses the membrane as a helical span at residues 359–379 (LWGAVNIILAVCLAMTVLVTK). Residues 380–406 (KAEEHRKIAGRMALPTNAIRDGALSLF) are Extracellular-facing. The helical transmembrane segment at 407–427 (AILGIPLAITFSIPFALASII) threads the bilayer. Over 428–443 (SSSSGAGQGLSLGVLN) the chain is Cytoplasmic. The helical transmembrane segment at 444–464 (MAIVIPQMIVSFGVGPIDALF) threads the bilayer. Over 465 to 468 (GGGN) the chain is Extracellular. A helical membrane pass occupies residues 469–489 (LPGFVVGAIAALISSVVALTV). Over 490–491 (LP) the chain is Cytoplasmic.

Belongs to the glycoside-pentoside-hexuronide (GPH) cation symporter transporter (TC 2.A.2.4) family. As to expression, widely expressed.

The protein localises to the cell membrane. It carries out the reaction sucrose(out) + H(+)(out) = sucrose(in) + H(+)(in). The protein operates within glycan biosynthesis; sucrose metabolism. With respect to regulation, inhibited by protonophores (e.g. carbonyl cyanide m-chlorophenyl-hydrazone (CCCP)) and SH group inhibitors (e.g. p-chloromercuribenzene sulphonic acid (PCMBS)). In terms of biological role, high-affinity sucrose transporter. Responsible for the transport of sucrose into the cell, with the concomitant uptake of protons (symport system). Can also transport a wide range of glucosides, such as helicin, salicin, arbutin, maltose, fraxin, esculin, uranose, alpha-methylglucoside, alpha-phenylglucoside and beta-phenylglucoside. Plays a role in flowering time transition delay. This Arabidopsis thaliana (Mouse-ear cress) protein is Sucrose transport protein SUC9.